Reading from the N-terminus, the 624-residue chain is Bifunctional 3'-phosphoadenosine 5'-phosphosulfate synthase 1 (624 aa).

Methionine 1 bears the N-acetylmethionine mark. The segment at methionine 1–isoleucine 225 is adenylyl-sulfate kinase. At lysine 12 the chain carries N6-acetyllysine. Glycine 62–threonine 67 serves as a coordination point for ATP. Adenosine 5'-phosphosulfate contacts are provided by residues aspartate 89–arginine 92, phenylalanine 101, arginine 106–asparagine 109, isoleucine 132–serine 133, lysine 171, and glycine 184–phenylalanine 185. Residues cysteine 207, cysteine 212, glutamine 419 to asparagine 422, glycine 521 to alanine 525, and alanine 563 each bind ATP. The interval valine 234–alanine 624 is sulfate adenylyltransferase.

In the N-terminal section; belongs to the APS kinase family. This sequence in the C-terminal section; belongs to the sulfate adenylyltransferase family. In terms of assembly, homodimer. In terms of tissue distribution, expressed in testis, pancreas, kidney, thymus, prostate, ovary, small intestine, colon, leukocytes and liver. Also expressed in high endothelial venules (HEV) cells and in cartilage.

The catalysed reaction is sulfate + ATP + H(+) = adenosine 5'-phosphosulfate + diphosphate. It carries out the reaction adenosine 5'-phosphosulfate + ATP = 3'-phosphoadenylyl sulfate + ADP + H(+). Its pathway is sulfur metabolism; sulfate assimilation. Its activity is regulated as follows. Inhibited by chlorate. The kinase activity is subject to inhibition by the substrate adenylyl sulfate. Bifunctional enzyme with both ATP sulfurylase and APS kinase activity, which mediates two steps in the sulfate activation pathway. The first step is the transfer of a sulfate group to ATP to yield adenosine 5'-phosphosulfate (APS), and the second step is the transfer of a phosphate group from ATP to APS yielding 3'-phosphoadenylylsulfate (PAPS: activated sulfate donor used by sulfotransferase). In mammals, PAPS is the sole source of sulfate; APS appears to be only an intermediate in the sulfate-activation pathway. Required for normal biosynthesis of sulfated L-selectin ligands in endothelial cells. The sequence is that of Bifunctional 3'-phosphoadenosine 5'-phosphosulfate synthase 1 (PAPSS1) from Homo sapiens (Human).